Here is a 591-residue protein sequence, read N- to C-terminus: uncharacterized protein (591 aa).

A signal peptide spans 1–30; sequence MGKLLFGKLVFKKSLFLLSGMSSLAVFLTA. The N-palmitoyl cysteine moiety is linked to residue Cys31. Cys31 carries the S-diacylglycerol cysteine lipid modification. Residues 476-488 are compositionally biased toward basic and acidic residues; the sequence is KKKLSEVATKKNE. Disordered stretches follow at residues 476 to 497 and 510 to 535; these read KKKLSEVATKKNENGSTKNGSN and SSSSTSMRNGSSDSNQQNFKTTDNDG. The span at 510–523 shows a compositional bias: low complexity; that stretch reads SSSSTSMRNGSSDS.

It to T.pallidum TmpC.

Its subcellular location is the cell membrane. This is an uncharacterized protein from Mycoplasma genitalium (strain ATCC 33530 / DSM 19775 / NCTC 10195 / G37) (Mycoplasmoides genitalium).